The primary structure comprises 172 residues: ATP-dependent kinase-like protein notR' (172 aa).

The protein belongs to the YFH7 family.

In terms of biological role, ATP-dependent kinase-like protein; part of the gene cluster that mediates the biosynthesis of notoamide, a fungal indole alkaloid that belongs to a family of natural products containing a characteristic bicyclo[2.2.2]diazaoctane core. The first step of notoamide biosynthesis involves coupling of L-proline and L-tryptophan by the bimodular NRPS notE', to produce cyclo-L-tryptophan-L-proline called brevianamide F. The reverse prenyltransferase notF' then acts as a deoxybrevianamide E synthase and converts brevianamide F to deoxybrevianamide E via reverse prenylation at C-2 of the indole ring leading to the bicyclo[2.2.2]diazaoctane core. Deoxybrevianamide E is further hydroxylated at C-6 of the indole ring, likely catalyzed by the cytochrome P450 monooxygenase notG', to yield 6-hydroxy-deoxybrevianamide E. 6-hydroxy-deoxybrevianamide E is a specific substrate of the prenyltransferase notC' for normal prenylation at C-7 to produce 6-hydroxy-7-prenyl-deoxybrevianamide, also called notoamide S. As the proposed pivotal branching point in notoamide biosynthesis, notoamide S can be diverted to notoamide E through an oxidative pyran ring closure putatively catalyzed by either notH' cytochrome P450 monooxygenase or the notD' FAD-linked oxidoreductase. This step would be followed by an indole 2,3-epoxidation-initiated pinacol-like rearrangement catalyzed by the notB' FAD-dependent monooxygenase leading to the formation of notoamide C and notoamide D. On the other hand notoamide S is converted to notoamide T by notH' (or notD'), a bifunctional oxidase that also functions as the intramolecular Diels-Alderase responsible for generation of (-)-notoamide T. To generate antipodal (+)-notoaminide T, notH (or notD) in Aspergillus strain MF297-2 is expected to catalyze a Diels-Alder reaction leading to the opposite stereochemistry. The remaining oxidoreductase notD' (or notH') likely catalyzes the oxidative pyran ring formation to yield (-)-stephacidin A. The FAD-dependent monooxygenase notI' is highly similar to notB' and is predicted to catalyze a similar conversion from (-)-stephacidin A to (+)-notoamide B via the 2,3-epoxidation of (-)-stephacidin A followed by a pinacol-type rearrangement. Finally, it remains unclear which enzyme could be responsible for the final hydroxylation steps leading to notoamide A and sclerotiamide. The function of notQ' in the notoamide biosynthesis has not been determined yet. The sequence is that of ATP-dependent kinase-like protein notR' from Aspergillus versicolor.